A 319-amino-acid chain; its full sequence is NADH-cytochrome b5 reductase 2 (319 aa).

The helical transmembrane segment at 30 to 46 threads the bilayer; the sequence is LAPVYLTVGLAGLGVGL. Residues 69–173 form the FAD-binding FR-type domain; it reads QGWVDLKLSE…KGPLPKYPWE (105 aa). 176 to 211 contacts FAD; the sequence is KHQHICLIAGGTGITPMYQLARHIFKNPEDKTKVTL.

This sequence belongs to the flavoprotein pyridine nucleotide cytochrome reductase family. FAD serves as cofactor.

It is found in the mitochondrion outer membrane. It catalyses the reaction 2 Fe(III)-[cytochrome b5] + NADH = 2 Fe(II)-[cytochrome b5] + NAD(+) + H(+). Its function is as follows. May mediate the reduction of outer membrane cytochrome b5. The sequence is that of NADH-cytochrome b5 reductase 2 (mcr1) from Aspergillus terreus (strain NIH 2624 / FGSC A1156).